A 365-amino-acid polypeptide reads, in one-letter code: Histidinol-phosphate aminotransferase (365 aa).

Residues 1–23 are disordered; the sequence is MSRPVPNPGILDIAPYTPGKSPV. At Lys-221 the chain carries N6-(pyridoxal phosphate)lysine.

This sequence belongs to the class-II pyridoxal-phosphate-dependent aminotransferase family. Histidinol-phosphate aminotransferase subfamily. In terms of assembly, homodimer. The cofactor is pyridoxal 5'-phosphate.

It catalyses the reaction L-histidinol phosphate + 2-oxoglutarate = 3-(imidazol-4-yl)-2-oxopropyl phosphate + L-glutamate. It functions in the pathway amino-acid biosynthesis; L-histidine biosynthesis; L-histidine from 5-phospho-alpha-D-ribose 1-diphosphate: step 7/9. This is Histidinol-phosphate aminotransferase from Rhodopseudomonas palustris (strain BisB18).